The following is a 320-amino-acid chain: Acetyl-coenzyme A carboxylase carboxyl transferase subunit alpha (320 aa).

The region spanning 33 to 294 (AFDTEIQALR…GDAVEDELKA (262 aa)) is the CoA carboxyltransferase C-terminal domain.

It belongs to the AccA family. In terms of assembly, acetyl-CoA carboxylase is a heterohexamer composed of biotin carboxyl carrier protein (AccB), biotin carboxylase (AccC) and two subunits each of ACCase subunit alpha (AccA) and ACCase subunit beta (AccD).

It is found in the cytoplasm. It carries out the reaction N(6)-carboxybiotinyl-L-lysyl-[protein] + acetyl-CoA = N(6)-biotinyl-L-lysyl-[protein] + malonyl-CoA. The protein operates within lipid metabolism; malonyl-CoA biosynthesis; malonyl-CoA from acetyl-CoA: step 1/1. Its function is as follows. Component of the acetyl coenzyme A carboxylase (ACC) complex. First, biotin carboxylase catalyzes the carboxylation of biotin on its carrier protein (BCCP) and then the CO(2) group is transferred by the carboxyltransferase to acetyl-CoA to form malonyl-CoA. In Caulobacter vibrioides (strain ATCC 19089 / CIP 103742 / CB 15) (Caulobacter crescentus), this protein is Acetyl-coenzyme A carboxylase carboxyl transferase subunit alpha.